The following is a 308-amino-acid chain: Olfactory receptor OR9H1 (308 aa).

Residues 1–26 lie on the Extracellular side of the membrane; the sequence is MVNFTHVSEFVLLGFQGGPGMQAMLF. The chain crosses the membrane as a helical span at residues 27 to 47; the sequence is LIFLILYGIAVVGNLGMIVII. Residues 48 to 58 are Cytoplasmic-facing; it reads WVDAHLHTPMY. Residues 59 to 81 traverse the membrane as a helical segment; it reads AFLQSLSLLDICYSSTIAPRALA. The Extracellular segment spans residues 82–95; the sequence is NSMQEDHTISFGGC. Cysteine 95 and cysteine 177 are disulfide-bonded. A helical membrane pass occupies residues 96–116; the sequence is AAQFFFLSLFGITEAFLLAAM. The Cytoplasmic segment spans residues 117 to 137; that stretch reads AYDRFIAICNPLLYSVSMSHQ. A helical transmembrane segment spans residues 138 to 158; it reads VCVLLISGSYLWGVVNAIAQT. Topologically, residues 159 to 203 are extracellular; the sequence is TMTFRLPFCGSNEINDFFCDVPPLLSLSCSDTFINQLVLLGLCGS. Residues 204–224 form a helical membrane-spanning segment; the sequence is IIVSTFLIVLVSYIYIISTIL. Residues 225–245 are Cytoplasmic-facing; that stretch reads RIPTMQGCQKAFSTCASHLTG. Residues 246 to 266 form a helical membrane-spanning segment; that stretch reads VCLFFGTVFFMYAQPSAIFFM. Over 267–269 the chain is Extracellular; that stretch reads EQS. Residues 270 to 290 form a helical membrane-spanning segment; it reads KIVSIFYTMVIPMLNPLIYSL. The Cytoplasmic portion of the chain corresponds to 291–308; that stretch reads RNKEVKQALRRSMQKLSL.

It belongs to the G-protein coupled receptor 1 family.

Its subcellular location is the cell membrane. Its function is as follows. Odorant receptor. The chain is Olfactory receptor OR9H1 from Homo sapiens (Human).